The sequence spans 81 residues: Small ribosomal subunit protein bS20 (81 aa).

This sequence belongs to the bacterial ribosomal protein bS20 family.

Its function is as follows. Binds directly to 16S ribosomal RNA. In Mycoplasma capricolum subsp. capricolum (strain California kid / ATCC 27343 / NCTC 10154), this protein is Small ribosomal subunit protein bS20.